The sequence spans 69 residues: Small, acid-soluble spore protein C1 (69 aa).

It belongs to the alpha/beta-type SASP family.

In terms of biological role, SASP are bound to spore DNA. They are double-stranded DNA-binding proteins that cause DNA to change to an a-like conformation. They protect the DNA backbone from chemical and enzymatic cleavage and are thus involved in dormant spore's high resistance to UV light. This Priestia megaterium (Bacillus megaterium) protein is Small, acid-soluble spore protein C1 (SASP-C1).